Reading from the N-terminus, the 123-residue chain is Small ribosomal subunit protein uS12 (123 aa).

Residue aspartate 89 is modified to 3-methylthioaspartic acid.

This sequence belongs to the universal ribosomal protein uS12 family. As to quaternary structure, part of the 30S ribosomal subunit. Contacts proteins S8 and S17. May interact with IF1 in the 30S initiation complex.

Its function is as follows. With S4 and S5 plays an important role in translational accuracy. Interacts with and stabilizes bases of the 16S rRNA that are involved in tRNA selection in the A site and with the mRNA backbone. Located at the interface of the 30S and 50S subunits, it traverses the body of the 30S subunit contacting proteins on the other side and probably holding the rRNA structure together. The combined cluster of proteins S8, S12 and S17 appears to hold together the shoulder and platform of the 30S subunit. The sequence is that of Small ribosomal subunit protein uS12 from Caulobacter vibrioides (strain ATCC 19089 / CIP 103742 / CB 15) (Caulobacter crescentus).